We begin with the raw amino-acid sequence, 439 residues long: Serine--tRNA ligase (439 aa).

237 to 239 is an L-serine binding site; it reads TAE. 268 to 270 provides a ligand contact to ATP; the sequence is RAE. Residue E291 participates in L-serine binding. An ATP-binding site is contributed by 362 to 365; it reads EISS. S397 lines the L-serine pocket.

Belongs to the class-II aminoacyl-tRNA synthetase family. Type-1 seryl-tRNA synthetase subfamily. Homodimer. The tRNA molecule binds across the dimer.

The protein localises to the cytoplasm. The enzyme catalyses tRNA(Ser) + L-serine + ATP = L-seryl-tRNA(Ser) + AMP + diphosphate + H(+). It carries out the reaction tRNA(Sec) + L-serine + ATP = L-seryl-tRNA(Sec) + AMP + diphosphate + H(+). The protein operates within aminoacyl-tRNA biosynthesis; selenocysteinyl-tRNA(Sec) biosynthesis; L-seryl-tRNA(Sec) from L-serine and tRNA(Sec): step 1/1. In terms of biological role, catalyzes the attachment of serine to tRNA(Ser). Is also able to aminoacylate tRNA(Sec) with serine, to form the misacylated tRNA L-seryl-tRNA(Sec), which will be further converted into selenocysteinyl-tRNA(Sec). This is Serine--tRNA ligase from Afipia carboxidovorans (strain ATCC 49405 / DSM 1227 / KCTC 32145 / OM5) (Oligotropha carboxidovorans).